We begin with the raw amino-acid sequence, 728 residues long: 1,4-alpha-glucan branching enzyme GlgB (728 aa).

Catalysis depends on D405, which acts as the Nucleophile. The active-site Proton donor is E458.

The protein belongs to the glycosyl hydrolase 13 family. GlgB subfamily. As to quaternary structure, monomer.

It carries out the reaction Transfers a segment of a (1-&gt;4)-alpha-D-glucan chain to a primary hydroxy group in a similar glucan chain.. The protein operates within glycan biosynthesis; glycogen biosynthesis. Its function is as follows. Catalyzes the formation of the alpha-1,6-glucosidic linkages in glycogen by scission of a 1,4-alpha-linked oligosaccharide from growing alpha-1,4-glucan chains and the subsequent attachment of the oligosaccharide to the alpha-1,6 position. This is 1,4-alpha-glucan branching enzyme GlgB from Serratia proteamaculans (strain 568).